Here is a 137-residue protein sequence, read N- to C-terminus: Large ribosomal subunit protein uL16 (137 aa).

Belongs to the universal ribosomal protein uL16 family. As to quaternary structure, part of the 50S ribosomal subunit.

Its function is as follows. Binds 23S rRNA and is also seen to make contacts with the A and possibly P site tRNAs. In Rhodopseudomonas palustris (strain BisA53), this protein is Large ribosomal subunit protein uL16.